The sequence spans 62 residues: Photosystem II reaction center protein Z (62 aa).

A run of 2 helical transmembrane segments spans residues 8 to 28 and 41 to 61; these read FLIALVLFSLLMVIGVPVAYA and YVGSAIWAILVVAVAILNFLV.

It belongs to the PsbZ family. As to quaternary structure, PSII is composed of 1 copy each of membrane proteins PsbA, PsbB, PsbC, PsbD, PsbE, PsbF, PsbH, PsbI, PsbJ, PsbK, PsbL, PsbM, PsbT, PsbX, PsbY, PsbZ, Psb30/Ycf12, peripheral proteins PsbO, CyanoQ (PsbQ), PsbU, PsbV and a large number of cofactors. It forms dimeric complexes.

The protein localises to the cellular thylakoid membrane. Functionally, may control the interaction of photosystem II (PSII) cores with the light-harvesting antenna, regulates electron flow through the 2 photosystem reaction centers. PSII is a light-driven water plastoquinone oxidoreductase, using light energy to abstract electrons from H(2)O, generating a proton gradient subsequently used for ATP formation. This Microcystis aeruginosa (strain NIES-843 / IAM M-2473) protein is Photosystem II reaction center protein Z.